The sequence spans 344 residues: 5,10-methenyltetrahydromethanopterin hydrogenase (344 aa).

Belongs to the HMD family. As to quaternary structure, homotetramer.

The enzyme catalyses 5,10-methenyl-5,6,7,8-tetrahydromethanopterin + H2 = 5,10-methylenetetrahydromethanopterin + H(+). It functions in the pathway one-carbon metabolism; methanogenesis from CO(2); 5,10-methylene-5,6,7,8-tetrahydromethanopterin from 5,10-methenyl-5,6,7,8-tetrahydromethanopterin (hydrogen route): step 1/1. With respect to regulation, activity requires salt; 100 mM sodium or potassium salts of chloride, phosphate or sulfate are equally effective. Inactivated by O(2). In terms of biological role, catalyzes the reversible reduction of methenyl-H(4)MPT(+) to methylene-H(4)MPT. The protein is 5,10-methenyltetrahydromethanopterin hydrogenase of Methanothermobacter marburgensis (strain ATCC BAA-927 / DSM 2133 / JCM 14651 / NBRC 100331 / OCM 82 / Marburg) (Methanobacterium thermoautotrophicum).